We begin with the raw amino-acid sequence, 47 residues long: Large ribosomal subunit protein bL33C (47 aa).

It belongs to the bacterial ribosomal protein bL33 family.

The polypeptide is Large ribosomal subunit protein bL33C (Staphylococcus epidermidis (strain ATCC 35984 / DSM 28319 / BCRC 17069 / CCUG 31568 / BM 3577 / RP62A)).